A 426-amino-acid chain; its full sequence is Outer capsid protein P8 (426 aa).

It belongs to the phytoreovirus outer capsid protein P8 family. As to quaternary structure, homotrimer. Homomultimer.

It localises to the virion. The protein localises to the host cytoplasm. Functionally, capsid protein which self-assembles to form the outer icosahedral capsid with a T=13 symmetry, about 70 nm in diameter and consisting of 260 P8 trimers. Mediates the secretion of assembled virus-like particles from host insect cells. The sequence is that of Outer capsid protein P8 from Nephotettix cincticeps (Green rice leafhopper).